Reading from the N-terminus, the 235-residue chain is Nucleoside diphosphate kinase 4, chloroplastic (235 aa).

ATP-binding residues include K93, F141, R169, T175, R186, and N196. The Pros-phosphohistidine intermediate role is filled by H199.

The protein belongs to the NDK family. In terms of assembly, homohexamer. Mg(2+) is required as a cofactor.

It localises to the plastid. The protein resides in the chloroplast thylakoid lumen. The catalysed reaction is a 2'-deoxyribonucleoside 5'-diphosphate + ATP = a 2'-deoxyribonucleoside 5'-triphosphate + ADP. It carries out the reaction a ribonucleoside 5'-diphosphate + ATP = a ribonucleoside 5'-triphosphate + ADP. Its function is as follows. Major role in the synthesis of nucleoside triphosphates other than ATP. The ATP gamma phosphate is transferred to the NDP beta phosphate via a ping-pong mechanism, using a phosphorylated active-site intermediate. Shows the highest specificity towards GDP. This is Nucleoside diphosphate kinase 4, chloroplastic (NDK4) from Spinacia oleracea (Spinach).